The sequence spans 189 residues: ATP synthase subunit b (189 aa).

A helical transmembrane segment spans residues 35 to 54 (LLAQMFNFLVLLILLRAVAY).

Belongs to the ATPase B chain family. F-type ATPases have 2 components, F(1) - the catalytic core - and F(0) - the membrane proton channel. F(1) has five subunits: alpha(3), beta(3), gamma(1), delta(1), epsilon(1). F(0) has three main subunits: a(1), b(2) and c(10-14). The alpha and beta chains form an alternating ring which encloses part of the gamma chain. F(1) is attached to F(0) by a central stalk formed by the gamma and epsilon chains, while a peripheral stalk is formed by the delta and b chains.

It is found in the cell membrane. F(1)F(0) ATP synthase produces ATP from ADP in the presence of a proton or sodium gradient. F-type ATPases consist of two structural domains, F(1) containing the extramembraneous catalytic core and F(0) containing the membrane proton channel, linked together by a central stalk and a peripheral stalk. During catalysis, ATP synthesis in the catalytic domain of F(1) is coupled via a rotary mechanism of the central stalk subunits to proton translocation. Its function is as follows. Component of the F(0) channel, it forms part of the peripheral stalk, linking F(1) to F(0). The sequence is that of ATP synthase subunit b from Desulforamulus reducens (strain ATCC BAA-1160 / DSM 100696 / MI-1) (Desulfotomaculum reducens).